The chain runs to 249 residues: Ubiquinone/menaquinone biosynthesis C-methyltransferase UbiE (249 aa).

S-adenosyl-L-methionine is bound by residues Thr72, Asp93, and 121–122; that span reads DA.

This sequence belongs to the class I-like SAM-binding methyltransferase superfamily. MenG/UbiE family.

It carries out the reaction a 2-demethylmenaquinol + S-adenosyl-L-methionine = a menaquinol + S-adenosyl-L-homocysteine + H(+). The enzyme catalyses a 2-methoxy-6-(all-trans-polyprenyl)benzene-1,4-diol + S-adenosyl-L-methionine = a 5-methoxy-2-methyl-3-(all-trans-polyprenyl)benzene-1,4-diol + S-adenosyl-L-homocysteine + H(+). Its pathway is quinol/quinone metabolism; menaquinone biosynthesis; menaquinol from 1,4-dihydroxy-2-naphthoate: step 2/2. It functions in the pathway cofactor biosynthesis; ubiquinone biosynthesis. Methyltransferase required for the conversion of demethylmenaquinol (DMKH2) to menaquinol (MKH2) and the conversion of 2-polyprenyl-6-methoxy-1,4-benzoquinol (DDMQH2) to 2-polyprenyl-3-methyl-6-methoxy-1,4-benzoquinol (DMQH2). The protein is Ubiquinone/menaquinone biosynthesis C-methyltransferase UbiE of Teredinibacter turnerae (strain ATCC 39867 / T7901).